The primary structure comprises 318 residues: Replication factor C small subunit (318 aa).

An ATP-binding site is contributed by 43–50 (GSVGTGKT).

This sequence belongs to the activator 1 small subunits family. RfcS subfamily. In terms of assembly, heteromultimer composed of small subunits (RfcS) and large subunits (RfcL).

Its function is as follows. Part of the RFC clamp loader complex which loads the PCNA sliding clamp onto DNA. This is Replication factor C small subunit from Thermoplasma volcanium (strain ATCC 51530 / DSM 4299 / JCM 9571 / NBRC 15438 / GSS1).